We begin with the raw amino-acid sequence, 554 residues long: Glucose-6-phosphate isomerase (554 aa).

Catalysis depends on Glu358, which acts as the Proton donor. Catalysis depends on residues His389 and Lys515.

This sequence belongs to the GPI family.

It localises to the cytoplasm. It carries out the reaction alpha-D-glucose 6-phosphate = beta-D-fructose 6-phosphate. It participates in carbohydrate biosynthesis; gluconeogenesis. It functions in the pathway carbohydrate degradation; glycolysis; D-glyceraldehyde 3-phosphate and glycerone phosphate from D-glucose: step 2/4. Its function is as follows. Catalyzes the reversible isomerization of glucose-6-phosphate to fructose-6-phosphate. The protein is Glucose-6-phosphate isomerase of Mycobacterium leprae (strain Br4923).